The following is a 264-amino-acid chain: 3'-5' ssDNA/RNA exonuclease TatD (264 aa).

A divalent metal cation contacts are provided by Glu-92, His-128, and His-153.

It belongs to the metallo-dependent hydrolases superfamily. TatD-type hydrolase family. TatD subfamily. Monomer. It depends on Mg(2+) as a cofactor.

The protein localises to the cytoplasm. In terms of biological role, 3'-5' exonuclease that prefers single-stranded DNA and RNA. May play a role in the H(2)O(2)-induced DNA damage repair. The sequence is that of 3'-5' ssDNA/RNA exonuclease TatD from Musicola paradisiaca (strain Ech703) (Dickeya paradisiaca).